Reading from the N-terminus, the 236-residue chain is Phosphoribosylaminoimidazole-succinocarboxamide synthase (236 aa).

This sequence belongs to the SAICAR synthetase family.

It carries out the reaction 5-amino-1-(5-phospho-D-ribosyl)imidazole-4-carboxylate + L-aspartate + ATP = (2S)-2-[5-amino-1-(5-phospho-beta-D-ribosyl)imidazole-4-carboxamido]succinate + ADP + phosphate + 2 H(+). It functions in the pathway purine metabolism; IMP biosynthesis via de novo pathway; 5-amino-1-(5-phospho-D-ribosyl)imidazole-4-carboxamide from 5-amino-1-(5-phospho-D-ribosyl)imidazole-4-carboxylate: step 1/2. The chain is Phosphoribosylaminoimidazole-succinocarboxamide synthase from Rickettsia bellii (strain OSU 85-389).